Consider the following 356-residue polypeptide: Peptide chain release factor 1 (356 aa).

Residue Gln-230 is modified to N5-methylglutamine. Over residues Ala-279–Lys-289 the composition is skewed to basic and acidic residues. A disordered region spans residues Ala-279 to Glu-299.

Belongs to the prokaryotic/mitochondrial release factor family. In terms of processing, methylated by PrmC. Methylation increases the termination efficiency of RF1.

The protein resides in the cytoplasm. Peptide chain release factor 1 directs the termination of translation in response to the peptide chain termination codons UAG and UAA. The chain is Peptide chain release factor 1 (prfA) from Caulobacter vibrioides (strain ATCC 19089 / CIP 103742 / CB 15) (Caulobacter crescentus).